The following is a 276-amino-acid chain: 4-deoxy-L-threo-5-hexosulose-uronate ketol-isomerase (276 aa).

Zn(2+) contacts are provided by histidine 194, histidine 196, glutamate 201, and histidine 243.

This sequence belongs to the KduI family. It depends on Zn(2+) as a cofactor.

The catalysed reaction is 5-dehydro-4-deoxy-D-glucuronate = 3-deoxy-D-glycero-2,5-hexodiulosonate. The protein operates within glycan metabolism; pectin degradation; 2-dehydro-3-deoxy-D-gluconate from pectin: step 4/5. Functionally, catalyzes the isomerization of 5-dehydro-4-deoxy-D-glucuronate to 3-deoxy-D-glycero-2,5-hexodiulosonate. This chain is 4-deoxy-L-threo-5-hexosulose-uronate ketol-isomerase, found in Caldicellulosiruptor bescii (strain ATCC BAA-1888 / DSM 6725 / KCTC 15123 / Z-1320) (Anaerocellum thermophilum).